The following is a 59-amino-acid chain: Large ribosomal subunit protein bL32 (59 aa).

Disordered stretches follow at residues methionine 1–threonine 23 and glutamate 35–aspartate 59. Positions arginine 49 to aspartate 59 are enriched in basic residues.

The protein belongs to the bacterial ribosomal protein bL32 family.

This chain is Large ribosomal subunit protein bL32, found in Burkholderia ambifaria (strain MC40-6).